The sequence spans 1430 residues: DNA-directed RNA polymerase subunit beta' (1430 aa).

Zn(2+) is bound by residues C71, C73, C86, and C89. Residues D461, D463, and D465 each coordinate Mg(2+). Residues C815, C889, C896, and C899 each contribute to the Zn(2+) site. The disordered stretch occupies residues 1388-1430 (RRQEAPAPAATPEQQAEEVFASLGQGEGEGPSPSDEASGPEVE). Residues 1392-1405 (APAPAATPEQQAEE) are compositionally biased toward low complexity.

This sequence belongs to the RNA polymerase beta' chain family. In terms of assembly, the RNAP catalytic core consists of 2 alpha, 1 beta, 1 beta' and 1 omega subunit. When a sigma factor is associated with the core the holoenzyme is formed, which can initiate transcription. The cofactor is Mg(2+). Zn(2+) serves as cofactor.

It carries out the reaction RNA(n) + a ribonucleoside 5'-triphosphate = RNA(n+1) + diphosphate. Functionally, DNA-dependent RNA polymerase catalyzes the transcription of DNA into RNA using the four ribonucleoside triphosphates as substrates. The sequence is that of DNA-directed RNA polymerase subunit beta' from Halorhodospira halophila (strain DSM 244 / SL1) (Ectothiorhodospira halophila (strain DSM 244 / SL1)).